The primary structure comprises 208 residues: Uracil phosphoribosyltransferase (208 aa).

Residues arginine 78, arginine 103, and 130–138 contribute to the 5-phospho-alpha-D-ribose 1-diphosphate site; that span reads DPMLATGGS. Uracil is bound by residues isoleucine 193 and 198–200; that span reads GDA. Aspartate 199 is a binding site for 5-phospho-alpha-D-ribose 1-diphosphate.

Belongs to the UPRTase family. Mg(2+) serves as cofactor.

The catalysed reaction is UMP + diphosphate = 5-phospho-alpha-D-ribose 1-diphosphate + uracil. Its pathway is pyrimidine metabolism; UMP biosynthesis via salvage pathway; UMP from uracil: step 1/1. With respect to regulation, allosterically activated by GTP. Functionally, catalyzes the conversion of uracil and 5-phospho-alpha-D-ribose 1-diphosphate (PRPP) to UMP and diphosphate. The sequence is that of Uracil phosphoribosyltransferase from Citrobacter koseri (strain ATCC BAA-895 / CDC 4225-83 / SGSC4696).